A 313-amino-acid polypeptide reads, in one-letter code: Intelectin-1 (313 aa).

An N-terminal signal peptide occupies residues 1–18 (MNQLSFLLFLIATTRGWS). Residues 32–255 (SSSPSLPRSC…AANALCAGMR (224 aa)) enclose the Fibrinogen C-terminal domain. The cysteines at positions 41 and 70 are disulfide-linked. Ca(2+) is bound by residues His-86, Glu-87, Asp-89, Gly-92, Gly-97, Asp-98, and Asp-133. 3 cysteine pairs are disulfide-bonded: Cys-94–Cys-280, Cys-199–Cys-259, and Cys-251–Cys-265. The N-linked (GlcNAc...) asparagine glycan is linked to Asn-163. 4 residues coordinate Ca(2+): Asn-260, Glu-262, Glu-274, and Asp-282. A carbohydrate contacts are provided by residues 262 to 263 (EH) and Glu-274. The GPI-anchor amidated serine moiety is linked to residue Ser-298. Positions 299–313 (SSREITEAAVLLFYR) are excised as a propeptide.

As to quaternary structure, homotrimer; disulfide-linked. May interact with LTF. N-glycosylated. Highly expressed in omental adipose tissue where it is found in stromal vascular cells but not in fat cells but is barely detectable in subcutaneous adipose tissue (at protein level). Highly expressed in the small intestine. Also found in the heart, testis, colon, salivary gland, skeletal muscle, pancreas and thyroid and, to a lesser degree, in the uterus, spleen, prostate, lymph node and thymus.

Its subcellular location is the cell membrane. It is found in the secreted. Lectin that specifically recognizes microbial carbohydrate chains in a calcium-dependent manner. Binds to microbial glycans that contain a terminal acyclic 1,2-diol moiety, including beta-linked D-galactofuranose (beta-Galf), D-phosphoglycerol-modified glycans, D-glycero-D-talo-oct-2-ulosonic acid (KO) and 3-deoxy-D-manno-oct-2-ulosonic acid (KDO). Binds to glycans from Gram-positive and Gram-negative bacteria, including K.pneumoniae, S.pneumoniae, Y.pestis, P.mirabilis and P.vulgaris. Does not bind human glycans. Probably plays a role in the defense system against microorganisms. May function as adipokine that has no effect on basal glucose uptake but enhances insulin-stimulated glucose uptake in adipocytes. Increases AKT phosphorylation in the absence and presence of insulin. May interact with lactoferrin/LTF and increase its uptake, and may thereby play a role in iron absorption. This chain is Intelectin-1 (ITLN1), found in Homo sapiens (Human).